Here is a 205-residue protein sequence, read N- to C-terminus: High frequency lysogenization protein HflD homolog (205 aa).

Belongs to the HflD family.

The protein resides in the cytoplasm. The protein localises to the cell inner membrane. This is High frequency lysogenization protein HflD homolog from Shewanella pealeana (strain ATCC 700345 / ANG-SQ1).